The sequence spans 79 residues: Acyl carrier protein (79 aa).

The Carrier domain maps to 2–77 (SSIEERVKKI…QAVDYINKHL (76 aa)). Position 37 is an O-(pantetheine 4'-phosphoryl)serine (S37).

It belongs to the acyl carrier protein (ACP) family. In terms of processing, 4'-phosphopantetheine is transferred from CoA to a specific serine of apo-ACP by AcpS. This modification is essential for activity because fatty acids are bound in thioester linkage to the sulfhydryl of the prosthetic group.

It localises to the cytoplasm. Its pathway is lipid metabolism; fatty acid biosynthesis. In terms of biological role, carrier of the growing fatty acid chain in fatty acid biosynthesis. In Alkalilimnicola ehrlichii (strain ATCC BAA-1101 / DSM 17681 / MLHE-1), this protein is Acyl carrier protein.